A 172-amino-acid polypeptide reads, in one-letter code: MAIGLAGKKAIVKEVNDVASNALAVTVAEYRGIEVADMTALRKKAREQGIFVKVVRNTLAKRAFEGTQFDDMGDALKGPLVYGFSMDAPGASARLFKDFSKENKNLQVTALSIGNGIMGPEKLDAVASLPTRDEALAKLLATFKEPVSKFVKTVNEVPSKFVRTLAAIKDAK.

The protein belongs to the universal ribosomal protein uL10 family. In terms of assembly, part of the ribosomal stalk of the 50S ribosomal subunit. The N-terminus interacts with L11 and the large rRNA to form the base of the stalk. The C-terminus forms an elongated spine to which L12 dimers bind in a sequential fashion forming a multimeric L10(L12)X complex.

Functionally, forms part of the ribosomal stalk, playing a central role in the interaction of the ribosome with GTP-bound translation factors. The sequence is that of Large ribosomal subunit protein uL10 from Idiomarina loihiensis (strain ATCC BAA-735 / DSM 15497 / L2-TR).